The following is a 461-amino-acid chain: uncharacterized protein (461 aa).

Residues M1–Y19 show a composition bias toward basic and acidic residues. The tract at residues M1–I21 is disordered.

Belongs to the CapA family.

Its function is as follows. Could be involved in the biosynthesis of a cell wall component. This is an uncharacterized protein from Sinorhizobium fredii (strain NBRC 101917 / NGR234).